Consider the following 181-residue polypeptide: Oligoribonuclease (181 aa).

The Exonuclease domain maps to 8–171; the sequence is LIWVDLEMTG…DDIHDSIAEL (164 aa). Y129 is a catalytic residue.

This sequence belongs to the oligoribonuclease family.

It is found in the cytoplasm. In terms of biological role, 3'-to-5' exoribonuclease specific for small oligoribonucleotides. This Photobacterium profundum (strain SS9) protein is Oligoribonuclease.